A 1068-amino-acid chain; its full sequence is Putative protein TIC 214 N-terminal part (1068 aa).

Transmembrane regions (helical) follow at residues 11-31 (VLWV…LFGI), 68-88 (ITGQ…VLLI), 92-112 (LLTL…KDLI), 131-151 (IFFD…SPVL), 166-186 (FIFL…FVSL), and 213-233 (FSII…VPFI).

This sequence belongs to the TIC214 family. As to quaternary structure, part of the Tic complex.

Its subcellular location is the plastid. The protein resides in the chloroplast inner membrane. Its function is as follows. Involved in protein precursor import into chloroplasts. May be part of an intermediate translocation complex acting as a protein-conducting channel at the inner envelope. The polypeptide is Putative protein TIC 214 N-terminal part (Marchantia polymorpha (Common liverwort)).